The sequence spans 429 residues: tRNA (guanine(9)-N1)-methyltransferase (429 aa).

An SAM-dependent MTase TRM10-type domain is found at 131-379 (KERKEAQRRI…AVIPIRKYAP (249 aa)). Residues 285–286 (LS), G305, 309–313 (DRNRH), C317, L331, and 344–346 (KAL) each bind S-adenosyl-L-methionine. D309 functions as the Proton acceptor in the catalytic mechanism. The segment at 383-429 (AKRAKTETKRNEKVEEEVECTSAEGEEDIGVIEESAEVDPEDVFSNQ) is disordered. Positions 386-395 (AKTETKRNEK) are enriched in basic and acidic residues. The segment covering 396 to 429 (VEEEVECTSAEGEEDIGVIEESAEVDPEDVFSNQ) has biased composition (acidic residues).

The protein belongs to the class IV-like SAM-binding methyltransferase superfamily. TRM10 family. Monomer.

Its subcellular location is the cytoplasm. The protein resides in the nucleus. The catalysed reaction is guanosine(9) in tRNA + S-adenosyl-L-methionine = N(1)-methylguanosine(9) in tRNA + S-adenosyl-L-homocysteine + H(+). S-adenosyl-L-methionine-dependent guanine N(1)-methyltransferase that catalyzes the formation of N(1)-methylguanine at position 9 (m1G9) in cytoplasmic tRNA. This chain is tRNA (guanine(9)-N1)-methyltransferase, found in Cryptococcus neoformans var. neoformans serotype D (strain B-3501A) (Filobasidiella neoformans).